Consider the following 277-residue polypeptide: 3-methyl-2-oxobutanoate hydroxymethyltransferase (277 aa).

2 residues coordinate Mg(2+): Asp53 and Asp96. 3-methyl-2-oxobutanoate is bound by residues 53–54 (DS), Asp96, and Lys126. Glu128 provides a ligand contact to Mg(2+). Catalysis depends on Glu195, which acts as the Proton acceptor.

This sequence belongs to the PanB family. As to quaternary structure, homodecamer; pentamer of dimers. Mg(2+) is required as a cofactor.

It is found in the cytoplasm. It catalyses the reaction 3-methyl-2-oxobutanoate + (6R)-5,10-methylene-5,6,7,8-tetrahydrofolate + H2O = 2-dehydropantoate + (6S)-5,6,7,8-tetrahydrofolate. It functions in the pathway cofactor biosynthesis; (R)-pantothenate biosynthesis; (R)-pantoate from 3-methyl-2-oxobutanoate: step 1/2. In terms of biological role, catalyzes the reversible reaction in which hydroxymethyl group from 5,10-methylenetetrahydrofolate is transferred onto alpha-ketoisovalerate to form ketopantoate. This chain is 3-methyl-2-oxobutanoate hydroxymethyltransferase, found in Chlorobium phaeobacteroides (strain DSM 266 / SMG 266 / 2430).